The sequence spans 519 residues: Circadian clock oscillator protein KaiC (519 aa).

KaiC domains follow at residues 1–246 (MSEK…VNIF) and 260–519 (VRVS…GSDS). Residues Gly-48, Thr-49, Gly-50, Lys-51, Thr-52, Leu-53, Lys-223, Leu-224, Arg-225, Thr-227, His-229, Thr-239, Thr-289, Gly-290, Thr-291, Gly-292, Lys-293, Thr-294, and Leu-295 each coordinate ATP. Thr-52 lines the Mg(2+) pocket. Thr-294 is a binding site for Mg(2+). Glu-317 contributes to the Mg(2+) binding site. Residue Trp-330 participates in ATP binding. Phosphoserine; by autocatalysis is present on Ser-430. At Thr-431 the chain carries Phosphothreonine; by autocatalysis. ATP is bound by residues Arg-450, Lys-456, Met-457, Arg-458, Ser-460, His-462, and Lys-464.

The protein belongs to the KaiC family. As to quaternary structure, homohexamer; hexamerization is dependent on ATP-binding. The KaiABC complex composition changes during the circadian cycle to control KaiC phosphorylation. Complexes KaiC(6), KaiA(2-4):KaiC(6), KaiB(6):KaiC(6) and KaiC(6):KaiB(6):KaiA(12) are among the most important forms, many form cooperatively. KaiC interacts with SasA, activating its autokinase function and leading to RpaA activation. The cofactor is Mg(2+). Phosphorylated on serine and threonine residues by autocatalysis. Has a 4 step phosphorylation cycle; the autokinase acts first on Thr-431, then Ser-430. When Ser-430 is modified KaiC switches to an autophosphatase mode, acting first on phospho-Thr-431 then phospho-Ser-430.

The catalysed reaction is L-seryl-[protein] + ATP = O-phospho-L-seryl-[protein] + ADP + H(+). It catalyses the reaction L-threonyl-[protein] + ATP = O-phospho-L-threonyl-[protein] + ADP + H(+). It carries out the reaction ATP + H2O = ADP + phosphate + H(+). The interaction with KaiA enhances its phosphorylation status, while the interaction with KaiB decreases it. In terms of biological role, central component of the KaiABC oscillator complex, which constitutes the main circadian regulator in cyanobacteria. Complex composition changes during the circadian cycle to control KaiC phosphorylation. KaiA stimulates KaiC autophosphorylation, while KaiB sequesters KaiA, leading to KaiC autodephosphorylation. Clock output pathways impact the RpaA transcriptional regulator. KaiC enhances the autophosphorylation activity of SasA, which then transfers its phosphate group to RpaA to activate it. KaiB and KaiC together enhance the phospho-RpaA dephosphatase activity of CikA. Its function is as follows. Has a weak, temperature-independent ATPase activity; ATPase activity defines the circadian period. The phosphorylation state of KaiC modulates its ATPase activity and effects KaiB binding. The chain is Circadian clock oscillator protein KaiC from Nostoc sp. (strain PCC 7120 / SAG 25.82 / UTEX 2576).